The chain runs to 459 residues: tRNA-guanine(15) transglycosylase (459 aa).

The active-site Nucleophile is the D90. Residues D125 and G192 each coordinate substrate. Residues C275, C277, and C280 each contribute to the Zn(2+) site.

This sequence belongs to the archaeosine tRNA-ribosyltransferase family. Requires Zn(2+) as cofactor.

It catalyses the reaction guanosine(15) in tRNA + 7-cyano-7-deazaguanine = 7-cyano-7-carbaguanosine(15) in tRNA + guanine. Its pathway is tRNA modification; archaeosine-tRNA biosynthesis. Its function is as follows. Exchanges the guanine residue with 7-cyano-7-deazaguanine (preQ0) at position 15 in the dihydrouridine loop (D-loop) of archaeal tRNAs. The sequence is that of tRNA-guanine(15) transglycosylase from Methanopyrus kandleri (strain AV19 / DSM 6324 / JCM 9639 / NBRC 100938).